A 733-amino-acid chain; its full sequence is Ferric aerobactin receptor (733 aa).

Residues 1–25 (MMISKKYTLWALNPLLLTMMAPAVA) form the signal peptide. A TonB box motif is present at residues 31–38 (ETFVVSAN). Residues 43–153 (TVAEMAQTTW…TGGLINIVTK (111 aa)) enclose the TBDR plug domain. The TBDR beta-barrel domain occupies 158–733 (ETIMEFEAGT…TFGLNYSVLF (576 aa)). The TonB C-terminal box signature appears at 716–733 (YDYKGRGRTFGLNYSVLF).

This sequence belongs to the TonB-dependent receptor family.

The protein localises to the cell outer membrane. In terms of biological role, receptor for aerobactin. The protein is Ferric aerobactin receptor (iutA) of Klebsiella pneumoniae.